The primary structure comprises 358 residues: Extracellular phospholipase C (358 aa).

It localises to the secreted. The sequence is that of Extracellular phospholipase C (plcA) from Dickeya chrysanthemi (Pectobacterium chrysanthemi).